We begin with the raw amino-acid sequence, 66 residues long: Large ribosomal subunit protein bL33c (66 aa).

It belongs to the bacterial ribosomal protein bL33 family.

Its subcellular location is the plastid. The protein resides in the chloroplast. The protein is Large ribosomal subunit protein bL33c of Adiantum capillus-veneris (Maidenhair fern).